Consider the following 171-residue polypeptide: Nicotinamide-nucleotide adenylyltransferase (171 aa).

It belongs to the archaeal NMN adenylyltransferase family.

It localises to the cytoplasm. It carries out the reaction beta-nicotinamide D-ribonucleotide + ATP + H(+) = diphosphate + NAD(+). It participates in cofactor biosynthesis; NAD(+) biosynthesis; NAD(+) from nicotinamide D-ribonucleotide: step 1/1. This Methanococcus maripaludis (strain C6 / ATCC BAA-1332) protein is Nicotinamide-nucleotide adenylyltransferase.